Reading from the N-terminus, the 180-residue chain is Transcription factor HES-7.1-A (180 aa).

A bHLH domain is found at 13–70 (HRKLLKPLVEKRRRERINNSLEKLRIFLFQTLKSEKLKNPKVEKAEILECTVQFLQSR). The 33-residue stretch at 84 to 116 (YQSGFQHCLETTLHFMNSKPDMNGVTKELLSHQ) folds into the Orange domain. Residues 176–179 (WRPW) carry the WRPW motif motif.

In terms of assembly, transcription repression requires formation of a complex with a corepressor protein of the Groucho/TLE family. As to expression, expressed in the presumptive midbrain-hindbrain boundary (MHB) as early as the early gastrula stage (stage 10.5). Expression in the MHB continues through to tailbud stage. Also transiently expressed in the eye anlage at late neurula stage.

Its subcellular location is the nucleus. Its function is as follows. Transcriptional repressor. Represses transcription from both N box- and E box-containing promoters. Demarcates the prospective midbrain-hindbrain boundary (MHB) region in the neuroectoderm in early gastrulae embryos by repressing transcription of a number of target genes. This is Transcription factor HES-7.1-A (hes7.1-a) from Xenopus laevis (African clawed frog).